A 65-amino-acid chain; its full sequence is Small ribosomal subunit protein bS21 (65 aa).

The protein belongs to the bacterial ribosomal protein bS21 family.

This chain is Small ribosomal subunit protein bS21, found in Acidobacterium capsulatum (strain ATCC 51196 / DSM 11244 / BCRC 80197 / JCM 7670 / NBRC 15755 / NCIMB 13165 / 161).